Here is a 415-residue protein sequence, read N- to C-terminus: Serine hydroxymethyltransferase (415 aa).

(6S)-5,6,7,8-tetrahydrofolate is bound by residues L121 and 125 to 127 (GHL). Position 230 is an N6-(pyridoxal phosphate)lysine (K230). Residue 355–357 (SPF) coordinates (6S)-5,6,7,8-tetrahydrofolate.

Belongs to the SHMT family. Homodimer. Requires pyridoxal 5'-phosphate as cofactor.

The protein resides in the cytoplasm. It carries out the reaction (6R)-5,10-methylene-5,6,7,8-tetrahydrofolate + glycine + H2O = (6S)-5,6,7,8-tetrahydrofolate + L-serine. It functions in the pathway one-carbon metabolism; tetrahydrofolate interconversion. The protein operates within amino-acid biosynthesis; glycine biosynthesis; glycine from L-serine: step 1/1. Its function is as follows. Catalyzes the reversible interconversion of serine and glycine with tetrahydrofolate (THF) serving as the one-carbon carrier. This reaction serves as the major source of one-carbon groups required for the biosynthesis of purines, thymidylate, methionine, and other important biomolecules. Also exhibits THF-independent aldolase activity toward beta-hydroxyamino acids, producing glycine and aldehydes, via a retro-aldol mechanism. This Lactococcus lactis subsp. cremoris (strain MG1363) protein is Serine hydroxymethyltransferase.